The chain runs to 594 residues: Spermidine/putrescine import ATP-binding protein PotA (594 aa).

An ABC transporter domain is found at 24–435; sequence IEIKKINKTY…PANNWVANFI (412 aa). Position 57-64 (57-64) interacts with ATP; it reads GPSGCGKT. The interval 125–304 is insert; it reads RKPIENVSAD…EWFDKKKLTR (180 aa).

The protein belongs to the ABC transporter superfamily. Spermidine/putrescine importer (TC 3.A.1.11.1) family. In terms of assembly, the complex is composed of two ATP-binding proteins (PotA), two transmembrane proteins (PotB and PotC) and a solute-binding protein (PotD).

Its subcellular location is the cell membrane. It carries out the reaction ATP + H2O + polyamine-[polyamine-binding protein]Side 1 = ADP + phosphate + polyamineSide 2 + [polyamine-binding protein]Side 1.. Part of the ABC transporter complex PotABCD involved in spermidine/putrescine import. Responsible for energy coupling to the transport system. The protein is Spermidine/putrescine import ATP-binding protein PotA of Malacoplasma penetrans (strain HF-2) (Mycoplasma penetrans).